Here is a 533-residue protein sequence, read N- to C-terminus: MAFANLRKILISDSLDPCCRKILQDGGLQVVEKQNLSKEELIAELQDCEGLIVRSATKVTADVINAAEKLQVVGRAGTGVDNVDLEAATRKGVLVMNTPNGNSLSAAELTCGMLMCLARQIPQATASMKDGKWDRKKFMGTELNGKTLGILGLGRIGREVAARMQAFGMKTVGYDPIISPEVAASFGVQQLPLEEIWPLCDFITVHTPLLPSTTGLLNDSTFAQCKKGVRVVNCARGGIVDEGALLRALQSGQCAGAALDVFTEEPPRDRALVDHENVISCPHLGASTKEAQSRCGEEIAVQFVDMVKGKSLTGVVNAQALTSAFSPHTKPWIGLAEALGTLMHAWAGSPKGTIQVVTQGTSLKNAGTCLSPAVIVGLLREASKQADVNLVNAKLLVKEAGLNVTTSHSPGVPGEQGIGECLLTVALAGAPYQAVGLVQGTTPMLQMLNGAVFRPEVPLRRGQPLLLFRAQPSDPVMLPTMIGLLAEAGVQLLSYQTSKVSDGDTWHVMGLSSLLPSLDAWKQHVSEAFQFCF.

Residue A2 is modified to N-acetylalanine. At S14 the chain carries Phosphoserine. Position 21 is an N6-acetyllysine; alternate (K21). Residue K21 forms a Glycyl lysine isopeptide (Lys-Gly) (interchain with G-Cter in SUMO1); alternate linkage. K21 is covalently cross-linked (Glycyl lysine isopeptide (Lys-Gly) (interchain with G-Cter in SUMO2); alternate). N6-acetyllysine is present on K58. NAD(+) is bound by residues T78, 155–156, D175, T207, 234–236, and D260; these read RI and CAR. At T78 the chain carries Phosphothreonine. R236 is an active-site residue. The active site involves E265. Catalysis depends on H283, which acts as the Proton donor. Residue 283-286 coordinates NAD(+); the sequence is HLGA.

It belongs to the D-isomer specific 2-hydroxyacid dehydrogenase family. In terms of assembly, homotetramer. In terms of tissue distribution, liver, kidney, brain, testis.

It catalyses the reaction (2R)-3-phosphoglycerate + NAD(+) = 3-phosphooxypyruvate + NADH + H(+). Its pathway is amino-acid biosynthesis; L-serine biosynthesis; L-serine from 3-phospho-D-glycerate: step 1/3. In terms of biological role, catalyzes the reversible oxidation of 3-phospho-D-glycerate to 3-phosphonooxypyruvate, the first step of the phosphorylated L-serine biosynthesis pathway. Does not catalyze the reversible oxidation of 2-hydroxyglutarate to 2-oxoglutarate and the reversible oxidation of (S)-malate to oxaloacetate. In Rattus norvegicus (Rat), this protein is D-3-phosphoglycerate dehydrogenase (Phgdh).